The sequence spans 74 residues: UPF0435 protein BCB4264_A0471 (74 aa).

It belongs to the UPF0435 family.

The chain is UPF0435 protein BCB4264_A0471 from Bacillus cereus (strain B4264).